A 349-amino-acid chain; its full sequence is Flap endonuclease 1 (349 aa).

The tract at residues 1–98 (MDLGEIVEDV…EEIERRKRAK (98 aa)) is N-domain. Mg(2+) contacts are provided by D27, D80, E152, E154, D173, D175, and D236. The interval 116-258 (EIRKYAQAAV…TALRIIKKYN (143 aa)) is I-domain. Residues 341-349 (KQTGLDQWF) form an interaction with PCNA region.

Belongs to the XPG/RAD2 endonuclease family. FEN1 subfamily. As to quaternary structure, interacts with PCNA. PCNA stimulates the nuclease activity without altering cleavage specificity. The cofactor is Mg(2+).

Structure-specific nuclease with 5'-flap endonuclease and 5'-3' exonuclease activities involved in DNA replication and repair. During DNA replication, cleaves the 5'-overhanging flap structure that is generated by displacement synthesis when DNA polymerase encounters the 5'-end of a downstream Okazaki fragment. Binds the unpaired 3'-DNA end and kinks the DNA to facilitate 5' cleavage specificity. Cleaves one nucleotide into the double-stranded DNA from the junction in flap DNA, leaving a nick for ligation. Also involved in the base excision repair (BER) pathway. Acts as a genome stabilization factor that prevents flaps from equilibrating into structures that lead to duplications and deletions. Also possesses 5'-3' exonuclease activity on nicked or gapped double-stranded DNA. This chain is Flap endonuclease 1, found in Sulfolobus acidocaldarius (strain ATCC 33909 / DSM 639 / JCM 8929 / NBRC 15157 / NCIMB 11770).